Consider the following 455-residue polypeptide: Asparagine--tRNA ligase (455 aa).

The protein belongs to the class-II aminoacyl-tRNA synthetase family. In terms of assembly, homodimer.

It is found in the cytoplasm. It catalyses the reaction tRNA(Asn) + L-asparagine + ATP = L-asparaginyl-tRNA(Asn) + AMP + diphosphate + H(+). This chain is Asparagine--tRNA ligase, found in Lawsonia intracellularis (strain PHE/MN1-00).